The primary structure comprises 217 residues: Uridylate kinase (217 aa).

6–10 is a binding site for ATP; it reads KISGR. Glycine 38 provides a ligand contact to UMP. The ATP site is built by glycine 39 and arginine 43. UMP contacts are provided by residues aspartate 60 and 107 to 113; that span reads FQPGQST. 3 residues coordinate ATP: asparagine 134, tyrosine 139, and aspartate 142.

This sequence belongs to the UMP kinase family. In terms of assembly, homohexamer.

The protein localises to the cytoplasm. It catalyses the reaction UMP + ATP = UDP + ADP. It functions in the pathway pyrimidine metabolism; CTP biosynthesis via de novo pathway; UDP from UMP (UMPK route): step 1/1. Its activity is regulated as follows. Inhibited by UTP. In terms of biological role, catalyzes the reversible phosphorylation of UMP to UDP. The protein is Uridylate kinase of Pyrobaculum arsenaticum (strain DSM 13514 / JCM 11321 / PZ6).